We begin with the raw amino-acid sequence, 274 residues long: Large ribosomal subunit protein uL2 (274 aa).

Disordered stretches follow at residues 28–59 and 222–274; these read APYA…GGHK and GAAM…RRTK. The segment covering 39–49 has biased composition (polar residues); it reads KSGGRNNNGRI. The span at 229-239 shows a compositional bias: basic and acidic residues; the sequence is DHPHGGGEGRS.

It belongs to the universal ribosomal protein uL2 family. As to quaternary structure, part of the 50S ribosomal subunit. Forms a bridge to the 30S subunit in the 70S ribosome.

Functionally, one of the primary rRNA binding proteins. Required for association of the 30S and 50S subunits to form the 70S ribosome, for tRNA binding and peptide bond formation. It has been suggested to have peptidyltransferase activity; this is somewhat controversial. Makes several contacts with the 16S rRNA in the 70S ribosome. The chain is Large ribosomal subunit protein uL2 from Marinomonas sp. (strain MWYL1).